The primary structure comprises 139 residues: S-adenosyl-L-methionine-binding protein AF_0241 (139 aa).

The 131-residue stretch at 3–133 folds into the TsaA-like domain; it reads LKPIGVVKSP…YSPEIDCVNQ (131 aa). S-adenosyl-L-methionine is bound by residues glutamine 16, 20 to 22, 58 to 59, arginine 82, leucine 92, and 113 to 116; these read PRQ, DK, and LDGS.

The protein belongs to the tRNA methyltransferase O family. As to quaternary structure, homodimer.

This Archaeoglobus fulgidus (strain ATCC 49558 / DSM 4304 / JCM 9628 / NBRC 100126 / VC-16) protein is S-adenosyl-L-methionine-binding protein AF_0241.